The sequence spans 106 residues: UPF0145 protein BDI_2732 (106 aa).

It belongs to the UPF0145 family.

The sequence is that of UPF0145 protein BDI_2732 from Parabacteroides distasonis (strain ATCC 8503 / DSM 20701 / CIP 104284 / JCM 5825 / NCTC 11152).